Here is an 892-residue protein sequence, read N- to C-terminus: Alanine--tRNA ligase (892 aa).

Positions 577, 581, 680, and 684 each coordinate Zn(2+).

The protein belongs to the class-II aminoacyl-tRNA synthetase family. It depends on Zn(2+) as a cofactor.

It is found in the cytoplasm. The catalysed reaction is tRNA(Ala) + L-alanine + ATP = L-alanyl-tRNA(Ala) + AMP + diphosphate. Its function is as follows. Catalyzes the attachment of alanine to tRNA(Ala) in a two-step reaction: alanine is first activated by ATP to form Ala-AMP and then transferred to the acceptor end of tRNA(Ala). Also edits incorrectly charged Ser-tRNA(Ala) and Gly-tRNA(Ala) via its editing domain. In Arthrobacter sp. (strain FB24), this protein is Alanine--tRNA ligase.